The chain runs to 216 residues: Nicotinamidase (216 aa).

Residue Asp-8 is part of the active site. 3 residues coordinate Zn(2+): Asp-51, His-53, and His-94. Lys-122 is a catalytic residue. Cys-167 acts as the Nucleophile in catalysis.

The protein belongs to the isochorismatase family.

It is found in the cytoplasm. The protein resides in the nucleus. It localises to the peroxisome. It catalyses the reaction nicotinamide + H2O = nicotinate + NH4(+). The protein operates within cofactor biosynthesis; nicotinate biosynthesis; nicotinate from nicotinamide: step 1/1. Inhibited by N-ethylmaleimide, HgCl(2) and PCMB. Competitively inhibited by NAD, NMN and 3-acetylpyridine. Functionally, catalyzes the deamidation of nicotinamide, an early step in the NAD(+) salvage pathway. Positively regulates SIR2-mediated silencing and longevity by preventing the accumulation of intracellular nicotinamide, an inhibitor of SIR2, during times of stress. Also acts on nicotinyl hydroxamate. The polypeptide is Nicotinamidase (PNC1) (Saccharomyces cerevisiae (strain ATCC 204508 / S288c) (Baker's yeast)).